The sequence spans 131 residues: Large ribosomal subunit protein bL12 (131 aa).

It belongs to the bacterial ribosomal protein bL12 family. In terms of assembly, homodimer. Part of the ribosomal stalk of the 50S ribosomal subunit. Forms a multimeric L10(L12)X complex, where L10 forms an elongated spine to which 2 to 4 L12 dimers bind in a sequential fashion. Binds GTP-bound translation factors.

In terms of biological role, forms part of the ribosomal stalk which helps the ribosome interact with GTP-bound translation factors. Is thus essential for accurate translation. In Prochlorococcus marinus (strain NATL1A), this protein is Large ribosomal subunit protein bL12.